The primary structure comprises 367 residues: D-alanine--D-alanine ligase (367 aa).

One can recognise an ATP-grasp domain in the interval 141–346; the sequence is KNLFAQAGLR…YPELIERLIA (206 aa). 174-229 serves as a coordination point for ATP; it reads ERELGYPCFVKPANAGSSVGISKCKQRGDLKAAFIEAFQYDRKIIIEEAIVGREIE. Mg(2+) is bound by residues aspartate 300, glutamate 313, and asparagine 315.

It belongs to the D-alanine--D-alanine ligase family. Mg(2+) is required as a cofactor. The cofactor is Mn(2+).

The protein localises to the cytoplasm. The enzyme catalyses 2 D-alanine + ATP = D-alanyl-D-alanine + ADP + phosphate + H(+). It participates in cell wall biogenesis; peptidoglycan biosynthesis. Its function is as follows. Cell wall formation. In Geobacillus kaustophilus (strain HTA426), this protein is D-alanine--D-alanine ligase.